Reading from the N-terminus, the 337-residue chain is Putative F-box protein At4g09870 (337 aa).

The region spanning Met1 to Leu46 is the F-box domain.

The protein is Putative F-box protein At4g09870 of Arabidopsis thaliana (Mouse-ear cress).